Consider the following 238-residue polypeptide: Membrane protein 2 (238 aa).

This sequence belongs to the varicellovirus ORF2 protein family. Post-translationally, phosphorylated by host.

It is found in the host membrane. This Varicella-zoster virus (strain Dumas) (HHV-3) protein is Membrane protein 2.